A 388-amino-acid polypeptide reads, in one-letter code: LL-diaminopimelate aminotransferase (388 aa).

Substrate is bound by residues Tyr13, Gly38, Lys102, Tyr126, and Asn176. Residues 101–102 (SK), Tyr126, Asn176, Tyr207, and 235–237 (SLS) each bind pyridoxal 5'-phosphate. The residue at position 238 (Lys238) is an N6-(pyridoxal phosphate)lysine. Arg246 provides a ligand contact to pyridoxal 5'-phosphate. A substrate-binding site is contributed by Arg364.

Belongs to the class-I pyridoxal-phosphate-dependent aminotransferase family. LL-diaminopimelate aminotransferase subfamily. In terms of assembly, homodimer. Pyridoxal 5'-phosphate is required as a cofactor.

The enzyme catalyses (2S,6S)-2,6-diaminopimelate + 2-oxoglutarate = (S)-2,3,4,5-tetrahydrodipicolinate + L-glutamate + H2O + H(+). It participates in amino-acid biosynthesis; L-lysine biosynthesis via DAP pathway; LL-2,6-diaminopimelate from (S)-tetrahydrodipicolinate (aminotransferase route): step 1/1. Its function is as follows. Involved in the synthesis of meso-diaminopimelate (m-DAP or DL-DAP), required for both lysine and peptidoglycan biosynthesis. Catalyzes the direct conversion of tetrahydrodipicolinate to LL-diaminopimelate. This chain is LL-diaminopimelate aminotransferase, found in Dehalococcoides mccartyi (strain ATCC BAA-2266 / KCTC 15142 / 195) (Dehalococcoides ethenogenes (strain 195)).